The primary structure comprises 183 residues: Probable GTP-binding protein EngB (183 aa).

Residues 17–183 enclose the EngB-type G domain; the sequence is DYPEVVFVGR…KKELLSRILN (167 aa). Residues 25-32, 51-55, 69-72, 137-140, and 166-168 contribute to the GTP site; these read GRSNVGKS, GRTRA, DVPG, TKID, and SSA. Mg(2+)-binding residues include serine 32 and threonine 53.

Belongs to the TRAFAC class TrmE-Era-EngA-EngB-Septin-like GTPase superfamily. EngB GTPase family. The cofactor is Mg(2+).

In terms of biological role, necessary for normal cell division and for the maintenance of normal septation. The protein is Probable GTP-binding protein EngB of Aquifex aeolicus (strain VF5).